The following is an 834-amino-acid chain: ATP-dependent 6-phosphofructokinase (834 aa).

The tract at residues 1 to 426 is N-terminal catalytic PFK domain 1; sequence MTTTSKIIND…FYEIFIACSN (426 aa). ATP-binding positions include G62, 123-124, and 153-156; these read RS and GDGS. D154 contributes to the Mg(2+) binding site. Substrate is bound by residues 199 to 201, R236, 243 to 245, E299, R326, and 332 to 335; these read SID, MGR, and HVQR. The Proton acceptor role is filled by D201. Residues 427-437 form an interdomain linker region; the sequence is LHRRKVESKGM. The interval 438–834 is C-terminal regulatory PFK domain 2; it reads GVLILHSGGP…DPNVNPQFTL (397 aa). Beta-D-fructose 2,6-bisphosphate contacts are provided by residues R507, 566–570, R603, 610–612, E666, R692, 698–701, and R764; these read TIANN, MGA, and HLQQ. The disordered stretch occupies residues 799 to 834; the sequence is SNLSEQDRPIKKSDISSPTSYSQKTFDPNVNPQFTL. The segment covering 803-812 has biased composition (basic and acidic residues); sequence EQDRPIKKSD. Residues 813 to 834 show a composition bias toward polar residues; the sequence is ISSPTSYSQKTFDPNVNPQFTL.

This sequence belongs to the phosphofructokinase type A (PFKA) family. ATP-dependent PFK group I subfamily. Eukaryotic two domain clade 'E' sub-subfamily. Homotetramer. Mg(2+) is required as a cofactor. Post-translationally, the N-terminus is blocked.

It is found in the cytoplasm. The catalysed reaction is beta-D-fructose 6-phosphate + ATP = beta-D-fructose 1,6-bisphosphate + ADP + H(+). The protein operates within carbohydrate degradation; glycolysis; D-glyceraldehyde 3-phosphate and glycerone phosphate from D-glucose: step 3/4. With respect to regulation, allosterically activated by ADP, AMP, or fructose 2,6-bisphosphate, and allosterically inhibited by ATP or citrate. Functionally, catalyzes the phosphorylation of D-fructose 6-phosphate to fructose 1,6-bisphosphate by ATP, the first committing step of glycolysis. In Dictyostelium discoideum (Social amoeba), this protein is ATP-dependent 6-phosphofructokinase (pfkA).